Reading from the N-terminus, the 683-residue chain is DNA-directed RNA polymerase subunit beta' (683 aa).

Residues cysteine 69, cysteine 71, cysteine 87, and cysteine 90 each coordinate Zn(2+). Residues aspartate 489, aspartate 491, and aspartate 493 each coordinate Mg(2+).

This sequence belongs to the RNA polymerase beta' chain family. RpoC1 subfamily. In plastids the minimal PEP RNA polymerase catalytic core is composed of four subunits: alpha, beta, beta', and beta''. When a (nuclear-encoded) sigma factor is associated with the core the holoenzyme is formed, which can initiate transcription. Requires Mg(2+) as cofactor. It depends on Zn(2+) as a cofactor.

It localises to the plastid. The protein localises to the chloroplast. The catalysed reaction is RNA(n) + a ribonucleoside 5'-triphosphate = RNA(n+1) + diphosphate. Functionally, DNA-dependent RNA polymerase catalyzes the transcription of DNA into RNA using the four ribonucleoside triphosphates as substrates. The chain is DNA-directed RNA polymerase subunit beta' from Sorghum bicolor (Sorghum).